Reading from the N-terminus, the 152-residue chain is Deoxyuridine 5'-triphosphate nucleotidohydrolase (152 aa).

Substrate is bound by residues 71-73 (RSG), N84, 88-90 (LVD), and M98.

The protein belongs to the dUTPase family. Mg(2+) is required as a cofactor.

The catalysed reaction is dUTP + H2O = dUMP + diphosphate + H(+). The protein operates within pyrimidine metabolism; dUMP biosynthesis; dUMP from dCTP (dUTP route): step 2/2. This enzyme is involved in nucleotide metabolism: it produces dUMP, the immediate precursor of thymidine nucleotides and it decreases the intracellular concentration of dUTP so that uracil cannot be incorporated into DNA. The chain is Deoxyuridine 5'-triphosphate nucleotidohydrolase from Shewanella oneidensis (strain ATCC 700550 / JCM 31522 / CIP 106686 / LMG 19005 / NCIMB 14063 / MR-1).